The following is a 96-amino-acid chain: Phosphoribosyl-ATP pyrophosphatase (96 aa).

This sequence belongs to the PRA-PH family.

The protein resides in the cytoplasm. The enzyme catalyses 1-(5-phospho-beta-D-ribosyl)-ATP + H2O = 1-(5-phospho-beta-D-ribosyl)-5'-AMP + diphosphate + H(+). It participates in amino-acid biosynthesis; L-histidine biosynthesis; L-histidine from 5-phospho-alpha-D-ribose 1-diphosphate: step 2/9. The polypeptide is Phosphoribosyl-ATP pyrophosphatase (Methanococcus maripaludis (strain DSM 14266 / JCM 13030 / NBRC 101832 / S2 / LL)).